Reading from the N-terminus, the 408-residue chain is RUN domain-containing protein 3B (408 aa).

The disordered stretch occupies residues 1–25; that stretch reads MASRSLGGLSGSRGGGGGGGGKKSL. Positions 8–22 are enriched in gly residues; that stretch reads GLSGSRGGGGGGGGK. Arg13 is subject to Omega-N-methylarginine. Residues 58 to 190 enclose the RUN domain; that stretch reads DDSSPEFNNF…IDFSFCLKGE (133 aa). The segment at 213-238 is disordered; the sequence is DSISSDEEELRTFGSSDSESSTPENV. A phosphoserine mark is found at Ser216 and Ser217. The segment covering 225 to 236 has biased composition (polar residues); sequence FGSSDSESSTPE. Positions 301-326 form a coiled coil; that stretch reads AHKLEKEQLEYIIVELQDQLKSYQSL. The interval 337 to 359 is disordered; sequence QASLDPSHSQEGDGKQDSLNFIG.

It belongs to the RUNDC3 family. As to quaternary structure, interacts with RAP2A.

This is RUN domain-containing protein 3B (Rundc3b) from Mus musculus (Mouse).